A 230-amino-acid polypeptide reads, in one-letter code: Sugar fermentation stimulation protein homolog (230 aa).

Belongs to the SfsA family.

The polypeptide is Sugar fermentation stimulation protein homolog (Clostridium botulinum (strain Alaska E43 / Type E3)).